The primary structure comprises 1309 residues: MASAARGESSNPYGGGLGTGGKFRKPTARRSQKTPYDRPTTSVRNAGLGGGDVRGGGWLSKLVDPAQRLITYSAQRLFGSLSRKRLGSGETPLQSPEQQKQLPERGVNQETKVGHKEDVSNLSMKNGLIRMEDTNASVDPPKDGFTDLEKILQGKTFTRSEVDRLTTLLRSKAADSSTMNEEQRNEVGMVVRHPPSHERDRTHPDNGSMNTLVSTPPGSLRTLDECIASPAQLAKAYMGSRPSEVTPSMLGLRGQAGREDSVFLNRTPFPQKSPTMSLVTKPSGQRPLENGFVTPRSRGRSAVYSMARTPYSRPQSSVKIGSLFQASPSKWEESLPSGSRQGFQSGLKRRSSVLDNDIGSVGPVRRIRQKSNLSSRSLALPVSESPLSVRANGGEKTTHTSKDSAEDIPGSSFNLVPTKSSEMASKILQQLDKLVSTREKSPSKLSPSMLRGPALKSLQNVEAPKFLGNLPEKKANSPDSSYQKQEISRESVSREVLAQSEKTGDAVDGTSKTGSSKDQDMRGKGVYMPLTNSLEEHPPKKRSFRMSAHEDFLELDDDLGAASTPCEVAEKQNAFEVEKSHISMPIGEKPLTPSEAMPSTSYISNGDASQGTSNGSLETERNKFVAFPIEAVQQSNMASEPTSKFIQGTEKSSISSGKPTSEEKRIPLEEPKKPAAVFPNISFSPPATGLLNQNSGASADIKLEKTSSTAFGVSEAWAKPTESKKTFSNSASGAESSTSAAPTLNGSIFSAGANAVTPPPSNGSLTSSPSFPPSISNIPSDNSVGDMPSTVQSFAATHNSSSIFGKLPTSNDSNSQSTSASPLSSTSPFKFGQPAAPFSAPAVSESSGQISKETEVKNATFGNTSTFKFGGMASADQSTGIVFGAKSAENKSRPGFVFGSSSVVGGSTLNPSTAAASAPESSGSLIFGVTSSSTPGTETSKISASSAATNTGNSVFGTSSFAFTSSGSSMVGGVSASTGSSVFGFNAVSSASATSSQSQASNLFGAGNAQTGNTGSGTTTSTQSIPFQFGSSPSAPSFGLSGNSSLASNSSPFGFSKSEPAVFTSVSTPQLSSTNSSASSSSTMSSPLFGTSWQAPNSSPNSGPVFSSSFTTSSTPTTFSFGGSSAATVSSTTTPIFGASTNNTPSPSPIFGFGSTPPTTPQQPVFGNSGTPSQSLFGNSTPGFAFGAPNNGNGINNNQQVSMEDSMAEDTDQANRASMVAPMFGQAAVSMPQPNFAFGGGAATQPPSMANPFQFGGQPMASTLQNASPFQASQSLEFQGGGSFSLGSTGGGDKSGRRIFKAKKSTRKK.

Disordered stretches follow at residues 1–58 (MASA…GGGW), 83–118 (RKRL…HKED), 173–210 (AADS…GSMN), 266–296 (RTPF…VTPR), 329–348 (SKWE…SGLK), 384–417 (ESPL…NLVP), 467–538 (LGNL…EEHP), 594–617 (SEAM…NGSL), and 635–680 (SNMA…VFPN). The segment at 2 to 677 (ASAARGESSN…LEEPKKPAAV (676 aa)) is 25 X 2 AA repeats of F-G. The span at 22 to 32 (KFRKPTARRSQ) shows a compositional bias: basic residues. Residues 47 to 58 (GLGGGDVRGGGW) are compositionally biased toward gly residues. Positions 91 to 101 (TPLQSPEQQKQ) are enriched in polar residues. The span at 195 to 204 (PSHERDRTHP) shows a compositional bias: basic and acidic residues. The segment covering 268–283 (PFPQKSPTMSLVTKPS) has biased composition (polar residues). Positions 396 to 405 (KTTHTSKDSA) are enriched in basic and acidic residues. Composition is skewed to polar residues over residues 597-617 (MPST…NGSL) and 635-659 (SNMA…SGKP). The span at 660–673 (TSEEKRIPLEEPKK) shows a compositional bias: basic and acidic residues. Residues 711 to 712 (FG) form repeat 1. The interval 719–865 (KPTESKKTFS…VKNATFGNTS (147 aa)) is disordered. Composition is skewed to low complexity over residues 728 to 741 (SNSA…TSAA) and 767 to 783 (SSPS…SDNS). The span at 789-803 (STVQSFAATHNSSSI) shows a compositional bias: polar residues. Repeat 2 spans residues 804–805 (FG). Residues 809–827 (TSNDSNSQSTSASPLSSTS) show a composition bias toward low complexity. Tandem repeats lie at residues 831 to 832 (FG), 861 to 862 (FG), 869 to 870 (FG), 883 to 884 (FG), 898 to 899 (FG), 927 to 928 (FG), 956 to 957 (FG), 983 to 984 (FG), 1004 to 1005 (FG), 1029 to 1030 (FG), 1038 to 1039 (FG), and 1053 to 1054 (FG). The segment covering 1004-1023 (FGAGNAQTGNTGSGTTTSTQ) has biased composition (low complexity). The interval 1004–1028 (FGAGNAQTGNTGSGTTTSTQSIPFQ) is disordered. Low complexity predominate over residues 1068–1086 (TPQLSSTNSSASSSSTMSS). A disordered region spans residues 1068–1105 (TPQLSSTNSSASSSSTMSSPLFGTSWQAPNSSPNSGPV). Residues 1089–1090 (FG) form repeat 15. A compositionally biased stretch (low complexity) spans 1096-1105 (PNSSPNSGPV). 10 tandem repeats follow at residues 1121 to 1122 (FG), 1137 to 1138 (FG), 1151 to 1152 (FG), 1153 to 1154 (FG), 1166 to 1167 (FG), 1177 to 1178 (FG), 1186 to 1187 (FG), 1224 to 1225 (FG), 1238 to 1239 (FG), and 1255 to 1256 (FG). The segment at 1278-1309 (FQGGGSFSLGSTGGGDKSGRRIFKAKKSTRKK) is disordered. Gly residues predominate over residues 1279 to 1293 (QGGGSFSLGSTGGGD). The segment covering 1297 to 1309 (RRIFKAKKSTRKK) has biased composition (basic residues).

Part of the nuclear pore complex (NPC). The NPC has an eight-fold symmetrical structure comprising a central transport channel and two rings, the cytoplasmic and nuclear rings, to which eight filaments are attached. The cytoplasmic filaments have loose ends, while the nuclear filaments are joined in a distal ring, forming a nuclear basket. NPCs are highly dynamic in configuration and composition, and can be devided in 3 subcomplexes, the NUP62 subcomplex, the NUP107-160 subcomplex and the NUP93 subcomplex, containing approximately 30 different nucleoporin proteins. Interacts with EER5, anchoring the TREX-2 complex on the nuclear pore complex. Interacts with UCH1 and UCH2.

It localises to the nucleus envelope. The protein localises to the nucleus. It is found in the nuclear pore complex. The protein resides in the cytoplasm. Its subcellular location is the cytosol. Functionally, nucleoporin required for nuclear mRNA export. Functions as an adapter and/or regulator molecule in the periphery of the nuclear pore complex (NPC). May interact with importin proteins and mediate active nucleocytoplasmic transport through the NPC. Involved in regulation of nuclear morphology. This Arabidopsis thaliana (Mouse-ear cress) protein is Nuclear pore complex protein NUP1.